Here is a 186-residue protein sequence, read N- to C-terminus: Lipid A palmitoyltransferase PagP (186 aa).

Residues methionine 1–alanine 25 form the signal peptide. Residues histidine 58, aspartate 101, and serine 102 contribute to the active site.

It belongs to the lipid A palmitoyltransferase family. As to quaternary structure, homodimer.

It localises to the cell outer membrane. The enzyme catalyses lipid A (E. coli) + a 1-hexadecanoyl-2-acyl-sn-glycero-3-phosphocholine = hepta-acyl lipid A (E. coli) + a 2-acyl-sn-glycero-3-phosphocholine. It carries out the reaction lipid IIA + a 1-hexadecanoyl-2-acyl-sn-glycero-3-phosphocholine = lipid IIB + a 2-acyl-sn-glycero-3-phosphocholine. It catalyses the reaction lipid IVA (E. coli) + a 1-hexadecanoyl-2-acyl-sn-glycero-3-phosphocholine = lipid IVB (E. coli) + a 2-acyl-sn-glycero-3-phosphocholine. Its function is as follows. Transfers a palmitate residue from the sn-1 position of a phospholipid to the N-linked hydroxymyristate on the proximal unit of lipid A or its precursors. The polypeptide is Lipid A palmitoyltransferase PagP (Escherichia coli (strain ATCC 55124 / KO11FL)).